A 392-amino-acid polypeptide reads, in one-letter code: MHNPTPRTESPSALAFIKRFFAAEAAGGLILMAAALAALIVANSPLADSYFAALHTVLAGMSVEHWINDGLMAIFFMLVGLEIKREMLAGQLASWSQRALPGFAALGGMVVPALIYVAFNWGQPDTIGGWAIPAATDIAFALGVLSLLGKRVPLSLKIFLSALAILDDLGAVLIIALFYTSDLSIPMLLAALGSIAVLVALNRLSVKKLLPYLIVGALLWFFMLQSGIHATLAGVALALCIPLGKPDEEASSPLLHLEEKLHPWVAFAVVPVFGFANAGVSLSGITVDKLLDPVPLGVALGLLIGKQVGIFALAALAIRAGLARLPDGSNWGQLYGVAALCGIGFTMSLFIGALAFPGAPELVDEVKVGVLIGSVLSALLGVVVLRRFGARG.

Transmembrane regions (helical) follow at residues 20 to 40, 63 to 83, 99 to 119, 127 to 147, 158 to 178, 181 to 201, 209 to 229, 265 to 285, 298 to 318, 336 to 356, and 365 to 385; these read FFAA…AALI, VEHW…GLEI, ALPG…YVAF, IGGW…VLSL, IFLS…IALF, SDLS…LVAL, LLPY…SGIH, VAFA…LSGI, VALG…ALAI, GVAA…ALAF, and EVKV…VVVL.

Belongs to the NhaA Na(+)/H(+) (TC 2.A.33) antiporter family.

It is found in the cell inner membrane. The catalysed reaction is Na(+)(in) + 2 H(+)(out) = Na(+)(out) + 2 H(+)(in). In terms of biological role, na(+)/H(+) antiporter that extrudes sodium in exchange for external protons. This is Na(+)/H(+) antiporter NhaA 2 from Pseudomonas savastanoi pv. phaseolicola (strain 1448A / Race 6) (Pseudomonas syringae pv. phaseolicola (strain 1448A / Race 6)).